Here is a 716-residue protein sequence, read N- to C-terminus: Antibacterial effector protein Tle3 (716 aa).

Residues 68–87 form a disordered region; sequence PTLPGGQANPGYLTPAGYSL.

In terms of assembly, interacts in the cytoplasm with the adapter protein Tla3. Interacts in the periplasm with the immunity protein Tli3.

The protein resides in the secreted. It is found in the host periplasm. Its activity is regulated as follows. Neutralized by the immunity protein Tli3 in the periplasm of P.aeruginosa cells. In terms of biological role, antibacterial effector. Is toxic once delivered in the periplasm of prey bacteria. This is Antibacterial effector protein Tle3 from Pseudomonas aeruginosa (strain ATCC 15692 / DSM 22644 / CIP 104116 / JCM 14847 / LMG 12228 / 1C / PRS 101 / PAO1).